A 147-amino-acid polypeptide reads, in one-letter code: MPGKKAPNGEFAGRKLKLKRKKFRWSDIRYKRRVLRLKEKSDPLEGAPQARGIVLEKIAVEAKQPNSGMRKAVRVQLIKNGKVVTAFCPGDGAIKFIDEHDEVIIEGIGGPKGGSMGDIPGIRYKVVKVNRVSLKELVKGRKEKPRR.

It belongs to the universal ribosomal protein uS12 family. In terms of assembly, part of the 30S ribosomal subunit.

Its function is as follows. With S4 and S5 plays an important role in translational accuracy. Located at the interface of the 30S and 50S subunits. The sequence is that of Small ribosomal subunit protein uS12 from Pyrococcus abyssi (strain GE5 / Orsay).